Consider the following 750-residue polypeptide: Catalase-peroxidase 1 (750 aa).

Residues 90-238 constitute a cross-link (tryptophyl-tyrosyl-methioninium (Trp-Tyr) (with M-264)); it reads WHSAGTYRVM…VSAAHMGLIY (149 aa). Residue His-91 is the Proton acceptor of the active site. A disordered region spans residues 199–218; the sequence is NEGHKESGVIDGSESKKGHK. The span at 200–218 shows a compositional bias: basic and acidic residues; the sequence is EGHKESGVIDGSESKKGHK. The tryptophyl-tyrosyl-methioninium (Tyr-Met) (with W-90) cross-link spans 238 to 264; sequence YVNPEGPDGIPDPVAAARDIRTTFSRM. Residue His-279 coordinates heme b.

Belongs to the peroxidase family. Peroxidase/catalase subfamily. In terms of assembly, homodimer or homotetramer. Predominantly homodimeric. Requires heme b as cofactor. Post-translationally, formation of the three residue Trp-Tyr-Met cross-link is important for the catalase, but not the peroxidase activity of the enzyme.

The protein resides in the cytoplasm. The enzyme catalyses H2O2 + AH2 = A + 2 H2O. It carries out the reaction 2 H2O2 = O2 + 2 H2O. In terms of biological role, bifunctional enzyme with both catalase and broad-spectrum peroxidase activity. The polypeptide is Catalase-peroxidase 1 (Pyricularia oryzae (strain 70-15 / ATCC MYA-4617 / FGSC 8958) (Rice blast fungus)).